A 757-amino-acid chain; its full sequence is Catalase-peroxidase (757 aa).

The tract at residues 1 to 28 (MENQSNDISKCPFHNGSMDNQAASGTKN) is disordered. A compositionally biased stretch (polar residues) spans 17–28 (SMDNQAASGTKN). The tryptophyl-tyrosyl-methioninium (Trp-Tyr) (with M-273) cross-link spans 100–247 (WHSAGTYRVH…LAAVQMGLIY (148 aa)). Histidine 101 serves as the catalytic Proton acceptor. The tryptophyl-tyrosyl-methioninium (Tyr-Met) (with W-100) cross-link spans 247 to 273 (YVNPEGPDGNPDPILAAKDIRDTFGRM). Heme b is bound at residue histidine 288.

This sequence belongs to the peroxidase family. Peroxidase/catalase subfamily. As to quaternary structure, homodimer or homotetramer. Requires heme b as cofactor. In terms of processing, formation of the three residue Trp-Tyr-Met cross-link is important for the catalase, but not the peroxidase activity of the enzyme.

It carries out the reaction H2O2 + AH2 = A + 2 H2O. The enzyme catalyses 2 H2O2 = O2 + 2 H2O. Its function is as follows. Bifunctional enzyme with both catalase and broad-spectrum peroxidase activity. The protein is Catalase-peroxidase of Flavobacterium johnsoniae (strain ATCC 17061 / DSM 2064 / JCM 8514 / BCRC 14874 / CCUG 350202 / NBRC 14942 / NCIMB 11054 / UW101) (Cytophaga johnsonae).